The chain runs to 226 residues: MEPIKNLPRLCRTLGYEFKNIDLLTQALTHRSAANKHNERLEFLGDSILSIVISDALYHQFPKATEGDLSRMRATLVRGDTLTLIAKAFKLGDYLFLGPGELKSGGFRRESILADAVEAIIGAIYLDSDLEVCRKLLLHWYAERLAEIQPGVNQKDAKTLLQEYLQGLKKPLPDYQVINIEGDAHDQTFTVECRIDDLSESVIGVASSRRKAEQIAAAQVLELLKK.

Residues 7–129 (LPRLCRTLGY…IIGAIYLDSD (123 aa)) enclose the RNase III domain. Glu-42 lines the Mg(2+) pocket. Asp-46 is a catalytic residue. Mg(2+) is bound by residues Asp-115 and Glu-118. Glu-118 is an active-site residue. The 71-residue stretch at 156 to 226 (DAKTLLQEYL…AAQVLELLKK (71 aa)) folds into the DRBM domain.

This sequence belongs to the ribonuclease III family. Homodimer. Mg(2+) is required as a cofactor.

It is found in the cytoplasm. It catalyses the reaction Endonucleolytic cleavage to 5'-phosphomonoester.. Functionally, digests double-stranded RNA. Involved in the processing of primary rRNA transcript to yield the immediate precursors to the large and small rRNAs (23S and 16S). Processes some mRNAs, and tRNAs when they are encoded in the rRNA operon. Processes pre-crRNA and tracrRNA of type II CRISPR loci if present in the organism. This is Ribonuclease 3 from Shewanella sp. (strain ANA-3).